The sequence spans 249 residues: E3 ubiquitin-protein ligase RMA1 (249 aa).

The RING-type zinc finger occupies 48–97 (CNICLDSVQEPVVTLCGHLFCWPCIHKWLDVQSFSTSDEYQRHRQCPVCK). A helical; Anchor for type IV membrane protein transmembrane segment spans residues 231–248 (LGRIFFFFMCCVVLCLLL).

Ubiquitous. Highly expressed in roots.

The protein resides in the endoplasmic reticulum membrane. It carries out the reaction S-ubiquitinyl-[E2 ubiquitin-conjugating enzyme]-L-cysteine + [acceptor protein]-L-lysine = [E2 ubiquitin-conjugating enzyme]-L-cysteine + N(6)-ubiquitinyl-[acceptor protein]-L-lysine.. Its pathway is protein modification; protein ubiquitination. In terms of biological role, E3 ubiquitin-protein ligase that promotes the ubiquitination and proteasomal degradation of aquaporin PIP2-1. Forms a ubiquitin ligase complex in cooperation with the E2 enzymes UCB8/UCB10. The protein is E3 ubiquitin-protein ligase RMA1 (RMA1) of Arabidopsis thaliana (Mouse-ear cress).